A 79-amino-acid polypeptide reads, in one-letter code: Large ribosomal subunit protein uL29 (79 aa).

It belongs to the universal ribosomal protein uL29 family.

The sequence is that of Large ribosomal subunit protein uL29 from Gluconacetobacter diazotrophicus (strain ATCC 49037 / DSM 5601 / CCUG 37298 / CIP 103539 / LMG 7603 / PAl5).